The sequence spans 202 residues: MNLEDIYRDAGAYLKGHFLLSSANHSEYYLQSAKVLENPILAGKLADELFEVIKNAGVEFDSVCSPALGGILAGYELARAGAKRFIFTERVEKVMSLRRGFSVAKGEKFIICEDIITTGGSALESAKIIEELGGVVVGFAALANRGFCKVHNMRNEGKSSCKLPADKPLFALGNFEFEIYTPEECPLCKTGSKAIKPGSRGN.

5-phospho-alpha-D-ribose 1-diphosphate is bound by residues Lys-93 and 113–121; that span reads EDIITTGGS. Positions 117 and 145 each coordinate orotate.

Belongs to the purine/pyrimidine phosphoribosyltransferase family. PyrE subfamily. In terms of assembly, homodimer. The cofactor is Mg(2+).

It carries out the reaction orotidine 5'-phosphate + diphosphate = orotate + 5-phospho-alpha-D-ribose 1-diphosphate. The protein operates within pyrimidine metabolism; UMP biosynthesis via de novo pathway; UMP from orotate: step 1/2. Catalyzes the transfer of a ribosyl phosphate group from 5-phosphoribose 1-diphosphate to orotate, leading to the formation of orotidine monophosphate (OMP). The polypeptide is Orotate phosphoribosyltransferase (Campylobacter fetus subsp. fetus (strain 82-40)).